The following is a 274-amino-acid chain: Elongation factor Ts (274 aa).

The tract at residues 82–85 is involved in Mg(2+) ion dislocation from EF-Tu; sequence TDFV.

The protein belongs to the EF-Ts family.

It is found in the cytoplasm. In terms of biological role, associates with the EF-Tu.GDP complex and induces the exchange of GDP to GTP. It remains bound to the aminoacyl-tRNA.EF-Tu.GTP complex up to the GTP hydrolysis stage on the ribosome. This chain is Elongation factor Ts, found in Christiangramia forsetii (strain DSM 17595 / CGMCC 1.15422 / KT0803) (Gramella forsetii).